Reading from the N-terminus, the 448-residue chain is Putative flavin-containing monooxygenase FMO GS-OX-like 10 (448 aa).

Residue 18 to 23 (GAGAAG) coordinates FAD. 212-217 (GSSVSG) lines the NADP(+) pocket.

Belongs to the FMO family. It depends on FAD as a cofactor.

Its function is as follows. Catalyzes the conversion of methylthioalkyl glucosinolates of any chain length into methylsulfinylalkyl glucosinolates. In Arabidopsis thaliana (Mouse-ear cress), this protein is Putative flavin-containing monooxygenase FMO GS-OX-like 10.